The following is a 238-amino-acid chain: MVLLLLVAIPLLVHSSRGPTHYEMLGRCRMVCDPHASRGQGPDGAPASVPSLPPGAKGEVGRRGKAGLRGPPGPPGPRGPPGEPGRPGPPGPPGPGPGGAAPPAGYVPRIAFYAGLRRPHEGYEVLRFDDVVTNVGNAYEAASGKFTCPMPGVYFFAYHVLMRGGDGTSMWADLMKNGQVRASAIAQDADQNYDYASNSVILHLDVGDEVFIKLDGGKVHGGNTNKYSTFSGFIIYPD.

Positions 1–15 are cleaved as a signal peptide; it reads MVLLLLVAIPLLVHS. Residues 37–102 form a disordered region; it reads SRGQGPDGAP…PGPGPGGAAP (66 aa). A Collagen-like domain is found at 53–96; it reads PPGAKGEVGRRGKAGLRGPPGPPGPRGPPGEPGRPGPPGPPGPG. The span at 71-96 shows a compositional bias: pro residues; sequence PPGPPGPRGPPGEPGRPGPPGPPGPG. In terms of domain architecture, C1q spans 105 to 238; the sequence is GYVPRIAFYA…TFSGFIIYPD (134 aa).

As to quaternary structure, forms homooligomers, predominantly dimers or trimers. Forms heterooligomers with C1QL1, C1QL2 and C1QL3, when proteins are coexpressed; this interaction does not occur after secretion. Interacts with ADGRB3. As to expression, highly expressed in testis and adipose tissue, brown adipose tissue expressing higher levels than subcutaneous and visceral white adipose tissue. In gonadal fat pad, expressed at lower levels in adipocytes than in the stromal vascular fraction (VSP), which contains preadipocytes, fibroblasts, endothelial cells and occasional immune cells. Expression exhibits sexually dimorphism, with higher levels in females than in males.

It is found in the secreted. Functionally, may regulate the number of excitatory synapses that are formed on hippocampus neurons. Has no effect on inhibitory synapses. May inhibit adipocyte differentiation at an early stage of the process. The protein is Complement C1q-like protein 4 (C1ql4) of Mus musculus (Mouse).